Here is a 29-residue protein sequence, read N- to C-terminus: Cyclotide mela-3 (29 aa).

The cyclopeptide (Gly-Asp) cross-link spans 1–29; sequence GKPICGETCFKGKCYTPGCTCSYPICKKD. Disulfide bonds link Cys-5–Cys-19, Cys-9–Cys-21, and Cys-14–Cys-26.

This is a cyclic peptide. Post-translationally, contains 3 disulfide bonds.

In terms of biological role, probably participates in a plant defense mechanism (Potential). Binds to and induces leakage in phospholipd membranes, particularly ones containing 1-palmitoyl-2-oleophosphatidylethanolamine (POPE). In vitro, displays cytotoxicity against cultured cells. Not active against Gram-negative bacterium E.coli ATCC 25922 or Gram-positive bacterium S.aureus ATCC 25923 up to a concentration of 64 uM. The chain is Cyclotide mela-3 from Melicytus latifolius (Norfolk Island mahoe).